Here is a 292-residue protein sequence, read N- to C-terminus: Phosphoenolpyruvate guanylyltransferase (292 aa).

Phosphoenolpyruvate is bound by residues Thr-168, Gly-184, and Ser-187. Residues 243-292 form a disordered region; sequence PLVAEDSGGSGGESGTSAESGLSVPPGIVGGTQRRIVSDASGPGRAKKYP.

It belongs to the CofC family.

The enzyme catalyses phosphoenolpyruvate + GTP + H(+) = enolpyruvoyl-2-diphospho-5'-guanosine + diphosphate. It functions in the pathway cofactor biosynthesis; coenzyme F420 biosynthesis. Functionally, guanylyltransferase that catalyzes the activation of phosphoenolpyruvate (PEP) as enolpyruvoyl-2-diphospho-5'-guanosine, via the condensation of PEP with GTP. It is involved in the biosynthesis of coenzyme F420, a hydride carrier cofactor. This Frankia casuarinae (strain DSM 45818 / CECT 9043 / HFP020203 / CcI3) protein is Phosphoenolpyruvate guanylyltransferase.